The chain runs to 1341 residues: WASH complex subunit 2A (1341 aa).

The tract at residues 1 to 220 (MMNRTTPDQE…VGSDRGSIVD (220 aa)) is sufficient for interaction with WASHC3, WASHC4 and WASHC5; required for interaction with WASHC1. Over residues 202-214 (GELSSEEGSVGSD) the composition is skewed to low complexity. Positions 202–405 (GELSSEEGSV…SSSKPGKKIP (204 aa)) are disordered. Acidic residues predominate over residues 220-232 (DTEEEKEEEESDE). Over residues 233 to 244 (DFAHHSDNEQNR) the composition is skewed to basic and acidic residues. Composition is skewed to acidic residues over residues 250–259 (SDEEEDDDGC) and 266–276 (EKEEEDIEDIE). The span at 293-307 (LAARIKGDAVGRVDE) shows a compositional bias: basic and acidic residues. The segment covering 355 to 366 (GSGGGLFSGGKG) has biased composition (gly residues). The tract at residues 356-600 (SGGGLFSGGK…QTLCLQAQRE (245 aa)) is sufficient for interaction with CCDC93. A required for interaction with CCDC22 and VPS35L region spans residues 356–742 (SGGGLFSGGK…KEAQLGVKSV (387 aa)). Positions 357 to 1341 (GGGLFSGGKG…DDPLNAFGGQ (985 aa)) are interaction with VPS35. 4 consecutive short sequence motifs (LFa) follow at residues 367–378 (LFDDEDEESDLF), 411–419 (VFLGDTDVF), 450–463 (LFDD…DDFF), and 482–491 (IFGDEEGDLF). The disordered stretch occupies residues 422–554 (ASVPSMKEPQ…EDLFSSQSAS (133 aa)). Over residues 451–462 (FDDDDGDDDDDF) the composition is skewed to acidic residues. Positions 507–517 (DENKARAEKKV) are enriched in basic and acidic residues. Positions 518-536 (TLSSSKNLKPSSETKTQKG) are enriched in polar residues. Short sequence motifs (LFa) lie at residues 537–548 (LFSDEEDSEDLF), 572–583 (LFDDEDEEDNLF), and 617–629 (LFSS…WNIP). S539 is modified (phosphoserine). Disordered stretches follow at residues 621–664 (DEED…KTSL), 696–739 (DSGG…QLGV), and 751–838 (ESLK…KSTG). Over residues 637–647 (SDSRSKGEPRD) the composition is skewed to basic and acidic residues. 3 consecutive short sequence motifs (LFa) follow at residues 664–674 (LFEEDEEDDLF), 690–702 (LFED…GSLF), and 726–738 (LFSD…AQLG). A compositionally biased stretch (basic and acidic residues) spans 751–768 (ESLKFGRTDVAESEKEGL). Residues 803-817 (LFDEEEDKMEDQNII) carry the LFa 11 motif. The span at 823 to 834 (EVGKGRDPDAHP) shows a compositional bias: basic and acidic residues. 3 consecutive short sequence motifs (LFa) follow at residues 839-847 (VFQDEELLF), 856-862 (DPDVDLF), and 878-888 (LFGDDEDDDLF). 2 disordered regions span residues 881-951 (DDED…KEPS) and 988-1205 (FPSS…LEDE). Composition is skewed to basic and acidic residues over residues 898 to 911 (QEKK…HSVD) and 917 to 931 (KHPE…KGIW). Residues 937–1341 (QDSSGLAPFK…DDPLNAFGGQ (405 aa)) form an interaction with phospholipids region. Basic residues predominate over residues 1028–1046 (NKSRVKMRGKRRPQTRAAR). Residues 1029–1047 (KSRVKMRGKRRPQTRAARR) form a required for interaction with F-actin-capping protein subunit alpha (CAPZA1 or CAPZA2 or CAPZA3) region. 2 positions are modified to phosphoserine: S1054 and S1087. The segment covering 1094-1110 (EALAAAAAPWEGGPVPG) has biased composition (low complexity). S1114 bears the Phosphoserine mark. 6 consecutive short sequence motifs (LFa) follow at residues 1129–1136 (LFDSGDIF), 1171–1185 (MFPA…DDLF), 1201–1209 (LLEDEDDLF), 1234–1240 (IFEDDIF), 1262–1270 (LFDDNIDIF), and 1290–1299 (IFDDDMDDIF). Residues 1135 to 1145 (IFSTGTGSQSV) show a composition bias toward polar residues. Positions 1302–1326 (GIQAKTTKPKSRSAQAAPEPRFEHK) are disordered. An LFa 21 motif is present at residues 1330 to 1338 (IFDDPLNAF).

This sequence belongs to the FAM21 family. In terms of assembly, component of the WASH core complex also described as WASH regulatory complex (SHRC) composed of WASH (WASHC1, WASH2P or WASH3P), WASHC2 (WASHC2A or WASHC2C), WASHC3, WASHC4 and WASHC5; in the complex interacts (via N-terminus) directly with WASHC1. The WASH core complex associates with the F-actin-capping protein dimer (formed by CAPZA1, CAPZA2 or CAPZA3 and CAPZB) in a transient or substoichiometric manner which was initially described as WASH complex. Interacts with VPS35; mediates the association with the retromer CSC complex. Interacts with FKBP15. Interacts with CCDC93, CCDC22, VPS35L; indicative for an association of the WASH core complex with the CCC and retriever complexes. Directly interacts with TBC1D23.

It localises to the early endosome membrane. The protein resides in the cell membrane. Acts at least in part as component of the WASH core complex whose assembly at the surface of endosomes inhibits WASH nucleation-promoting factor (NPF) activity in recruiting and activating the Arp2/3 complex to induce actin polymerization and is involved in the fission of tubules that serve as transport intermediates during endosome sorting. Mediates the recruitment of the WASH core complex to endosome membranes via binding to phospholipids and VPS35 of the retromer CSC. Mediates the recruitment of the F-actin-capping protein dimer to the WASH core complex probably promoting localized F-actin polymerization needed for vesicle scission. Via its C-terminus binds various phospholipids, most strongly phosphatidylinositol 4-phosphate (PtdIns-(4)P), phosphatidylinositol 5-phosphate (PtdIns-(5)P) and phosphatidylinositol 3,5-bisphosphate (PtdIns-(3,5)P2). Involved in the endosome-to-plasma membrane trafficking and recycling of SNX27-retromer-dependent cargo proteins, such as GLUT1. Required for the association of DNAJC13, ENTR1, ANKRD50 with retromer CSC subunit VPS35. Required for the endosomal recruitment of CCC complex subunits COMMD1 and CCDC93 as well as the retriever complex subunit VPS35L. The polypeptide is WASH complex subunit 2A (Homo sapiens (Human)).